A 160-amino-acid chain; its full sequence is MTRGLVFFVSAACGVLADQLSKFIIAANLTPGTAIPESGFFQIVHVHNTGAAFSIFRGHTEWLIAASCLGVILALTAFFLRKKLPFLDTRPGVAALGIILAGTIGNLIDRVRLGYVTDFIQVGNFPTFNMADSCLTLGIIWLVLLYLTSSHSGGDASENA.

Transmembrane regions (helical) follow at residues 60-80 (TEWL…AFFL) and 84-104 (LPFL…AGTI). Catalysis depends on residues Asp-118 and Asp-132. Residues 127–147 (TFNMADSCLTLGIIWLVLLYL) traverse the membrane as a helical segment.

Belongs to the peptidase A8 family.

Its subcellular location is the cell membrane. It catalyses the reaction Release of signal peptides from bacterial membrane prolipoproteins. Hydrolyzes -Xaa-Yaa-Zaa-|-(S,diacylglyceryl)Cys-, in which Xaa is hydrophobic (preferably Leu), and Yaa (Ala or Ser) and Zaa (Gly or Ala) have small, neutral side chains.. It functions in the pathway protein modification; lipoprotein biosynthesis (signal peptide cleavage). This protein specifically catalyzes the removal of signal peptides from prolipoproteins. The protein is Lipoprotein signal peptidase of Dehalococcoides mccartyi (strain ATCC BAA-2266 / KCTC 15142 / 195) (Dehalococcoides ethenogenes (strain 195)).